The sequence spans 86 residues: Small muscular protein (86 aa).

The interval 20–64 (MGAFRPGAGQPPRRKECTPEVEEGVPPTSDEEKKPIPGAKKLPGP) is disordered.

This sequence belongs to the SMPX family.

In terms of biological role, plays a role in the regulatory network through which muscle cells coordinate their structural and functional states during growth, adaptation, and repair. The sequence is that of Small muscular protein (SMPX) from Pongo abelii (Sumatran orangutan).